Here is a 582-residue protein sequence, read N- to C-terminus: uncharacterized protein (582 aa).

The chain crosses the membrane as a helical span at residues 20–40 (GFWALGLFGAAINAFSAVLIV).

It is found in the membrane. This is an uncharacterized protein from Mycoplasma pneumoniae (strain ATCC 29342 / M129 / Subtype 1) (Mycoplasmoides pneumoniae).